A 512-amino-acid polypeptide reads, in one-letter code: Solute carrier family 2, facilitated glucose transporter member 7 (512 aa).

Over 1–21 (MENKEAGTPPPIPSREGRLQP) the chain is Cytoplasmic. Residues 22 to 42 (TLLLATLSAAFGSAFQYGYNL) traverse the membrane as a helical segment. Residues 43-78 (SVVNTPHKVFKSFYNETYFERHATFMDGKLMLLLWS) lie on the Extracellular side of the membrane. An N-linked (GlcNAc...) asparagine glycan is attached at Asn57. Residues 79–99 (CTVSMFPLGGLLGSLLVGLLV) form a helical membrane-spanning segment. Topologically, residues 100 to 107 (DSCGRKGT) are cytoplasmic. Residues 108 to 128 (LLINNIFAIIPAILMGVSKVA) form a helical membrane-spanning segment. Residues 129–138 (KAFELIVFSR) are Extracellular-facing. The chain crosses the membrane as a helical span at residues 139 to 159 (VVLGVCAGISYSALPMYLGEL). The Cytoplasmic portion of the chain corresponds to 160 to 172 (APKNLRGMVGTMT). The helical transmembrane segment at 173–193 (EVFVIVGVFLAQIFSLQAILG) threads the bilayer. At 194 to 198 (NPAGW) the chain is on the extracellular side. The helical transmembrane segment at 199–219 (PVLLALTGVPALLQLLTLPFF) threads the bilayer. The Cytoplasmic portion of the chain corresponds to 220-281 (PESPRYSLIQ…LHLCALRSLR (62 aa)). The helical transmembrane segment at 282-302 (WQLLSIIVLMAGQQLSGINAI) threads the bilayer. D-glucose is bound by residues 294-295 (QQ) and Asn300. Topologically, residues 303–321 (NYYADTIYTSAGVEAAHSQ) are extracellular. A helical membrane pass occupies residues 322-342 (YVTVGSGVVNIVMTITSAVLV). D-glucose is bound at residue Asn331. Topologically, residues 343–350 (ERLGRRHL) are cytoplasmic. Residues 351–371 (LLAGYGICGSACLVLTVVLLF) traverse the membrane as a helical segment. Topologically, residues 372 to 379 (QNRVPELS) are extracellular. Residues 380–400 (YLGIICVFAYIAGHSIGPSPV) form a helical membrane-spanning segment. Topologically, residues 401–415 (PSVVRTEIFLQSSRR) are cytoplasmic. The helical transmembrane segment at 416–436 (AAFMVDGAVHWLTNFIIGFLF) threads the bilayer. Residues 437–445 (PSIQEAIGA) lie on the Extracellular side of the membrane. Residues 446-466 (YSFIIFAGICLLTAIYIYVVI) traverse the membrane as a helical segment. Topologically, residues 467-512 (PETKGKTFVEINRIFAKRNRVKLPEEKEETIDAGPPTASPAKETSF) are cytoplasmic. A disordered region spans residues 491 to 512 (EEKEETIDAGPPTASPAKETSF).

The protein belongs to the major facilitator superfamily. Sugar transporter (TC 2.A.1.1) family. Glucose transporter subfamily. As to expression, expressed in small intestine and colon. Weakly expressed in testis and prostate.

It is found in the cell membrane. It localises to the apical cell membrane. It catalyses the reaction D-glucose(out) = D-glucose(in). It carries out the reaction D-fructose(out) = D-fructose(in). With respect to regulation, glucose and fructose transport are inhibited by the flavonoid apigenin. Probable sugar transporter. Even if its physiological substrate is subject to discussion, it is able to transport glucose and fructose. Does not transport galactose, 2-deoxy-d-glucose and xylose. This Homo sapiens (Human) protein is Solute carrier family 2, facilitated glucose transporter member 7.